The chain runs to 381 residues: Protein palisade (381 aa).

The N-terminal stretch at 1–25 (MMMHSRNRSWTLTLLALGVVLATSA) is a signal peptide. 6 consecutive repeat copies span residues 190-199 (PAAPAYEAPA), 200-209 (PPAPAYEAPA), 210-219 (PPAPAYEAPA), 220-229 (PAAPAYEAPA), 230-239 (PAAPAYEAPT), and 247-256 (PPAPAYEPPA). The segment at 190–256 (PAAPAYEAPA…PPAPAYEPPA (67 aa)) is 6 X 10 AA approximate tandem repeats of P-[AP]-A-P-A-Y-E-[AP]-P-[AT]. 2 disordered regions span residues 236–270 (EAPTTDYSAPAPPAPAYEPPASSYTQGYSQPAQPS) and 309–329 (TPTAPPPPPPPAPVYEAPSQN). Over residues 311-321 (TAPPPPPPPAP) the composition is skewed to pro residues.

In terms of processing, sulfated by pip; may be involved in embryo dorsal-ventral axis determination. Sulfation by pip may occur on covalently bound glycosaminoglycans. Post-translationally, may undergo both disulfide and non-disulfide cross-linking upon incorporation into the vitelline membrane. As to expression, present in the perivitelline space of stage 10 egg chambers and in the vitelline membrane adjacent to the oocyte in stage 13 and 14 egg chambers (at protein level).

The protein resides in the secreted. The protein localises to the extracellular space. Its subcellular location is the extracellular matrix. Functionally, minor protein component of the vitelline membrane. Involved in vitelline membrane biogenesis during late stages of oogenesis. Required for efficient disulfide and non-disulfide cross-linking of several vitelline membrane components. The polypeptide is Protein palisade (Drosophila melanogaster (Fruit fly)).